A 150-amino-acid polypeptide reads, in one-letter code: MARISLASSSAGVAGKPRGGGGLHPLGQTRKTLPGERRDTTQKITKPRYKPGQKALKEIRRYQRGTELLIAKLPFARVVREVALNYLGSEYGNLQWQSMALLALQEAAEAFLVHLFEDVNLCAIHAKRVTIMQKDMQLARRIRGAWGGAG.

A compositionally biased stretch (polar residues) spans 1 to 11 (MARISLASSSA). Positions 1–50 (MARISLASSSAGVAGKPRGGGGLHPLGQTRKTLPGERRDTTQKITKPRYK) are disordered. The tract at residues 32 to 145 (TLPGERRDTT…MQLARRIRGA (114 aa)) is H3-like.

This sequence belongs to the histone H3 family. Component of centromeric nucleosomes, where DNA is wrapped around a histone octamer core. The octamer contains two molecules each of H2A, H2B, CSE4/CENPA and H4 assembled in one CSE4-H4 heterotetramer and two H2A-H2B heterodimers. Interacts with the inner kinetochore. Post-translationally, ubiquitinated. Is degraded through ubiquitin-mediated proteolysis when not protected by its association to the kinetochore.

It localises to the nucleus. Its subcellular location is the chromosome. The protein localises to the centromere. Functionally, histone H3-like nucleosomal protein that is specifically found in centromeric nucleosomes. Replaces conventional H3 in the nucleosome core of centromeric chromatin that serves as an assembly site for the inner kinetochore. Required for recruitment and assembly of kinetochore proteins, mitotic progression and chromosome segregation. May serve as an epigenetic mark that propagates centromere identity through replication and cell division. The polypeptide is Histone H3-like centromeric protein CSE4 (CSE4) (Yarrowia lipolytica (strain CLIB 122 / E 150) (Yeast)).